The following is an 812-amino-acid chain: Mitochondrial intermediate peptidase (812 aa).

The N-terminal 35 residues, 1–35 (MLKLLRPRPWVCNSCLNRVAFPKPYPVGSRSTRWL), are a transit peptide targeting the mitochondrion. Positions 518–544 (STSEGGPAFGSPESAANDGMAASRGAS) are disordered. His587 serves as a coordination point for Zn(2+). Glu588 is an active-site residue. Residues His591 and His594 each coordinate Zn(2+).

It belongs to the peptidase M3 family. The cofactor is Zn(2+).

It localises to the mitochondrion matrix. The enzyme catalyses Release of an N-terminal octapeptide as second stage of processing of some proteins imported into the mitochondrion.. Functionally, cleaves proteins, imported into the mitochondrion, to their mature size. While most mitochondrial precursor proteins are processed to the mature form in one step by mitochondrial processing peptidase (MPP), the sequential cleavage by MIP of an octapeptide after initial processing by MPP is a required step for a subgroup of nuclear-encoded precursor proteins destined for the matrix or the inner membrane. This chain is Mitochondrial intermediate peptidase (OCT1), found in Pyricularia oryzae (strain 70-15 / ATCC MYA-4617 / FGSC 8958) (Rice blast fungus).